The following is a 442-amino-acid chain: Ribosome biogenesis protein NOP53 (442 aa).

Residues 242–264 (KPSSNTNLKKIEDKTPRQAQKSV) form a disordered region.

It belongs to the NOP53 family.

Its subcellular location is the nucleus. The protein localises to the nucleolus. The protein resides in the nucleoplasm. May play a role in ribosome biogenesis. The sequence is that of Ribosome biogenesis protein NOP53 from Arabidopsis thaliana (Mouse-ear cress).